A 221-amino-acid chain; its full sequence is Tetraspanin-2 (221 aa).

The Cytoplasmic portion of the chain corresponds to 1–13 (MGRFRGGLRCIKY). Residues 14-34 (LLLGFNLLFWLAGSAVIAFGL) form a helical membrane-spanning segment. Over 35-54 (WFRFGGTMKDLSSEDKSPEY) the chain is Extracellular. The helical transmembrane segment at 55–75 (FYVGLYVLVGAGALMMTVGFF) threads the bilayer. Residues 76-90 (GCCGAMRESQCVLGS) lie on the Cytoplasmic side of the membrane. Residues 91-111 (FFTCLLVIFAAEVTTGVFAFI) form a helical membrane-spanning segment. At 112 to 188 (GKDVAIRHVQ…ETVISAKLQL (77 aa)) the chain is on the extracellular side. A glycan (N-linked (GlcNAc...) asparagine) is linked at asparagine 139. A helical transmembrane segment spans residues 189–209 (IGIVGIGIAGLTIFGMIFSMV). Topologically, residues 210–221 (LCCAIRNSRDVI) are cytoplasmic.

Belongs to the tetraspanin (TM4SF) family.

It localises to the membrane. Its function is as follows. May play a role in signalling in oligodendrocytes in the early stages of their terminal differentiation into myelin-forming glia and may also function in stabilizing the mature sheath. The polypeptide is Tetraspanin-2 (Tspan2) (Mus musculus (Mouse)).